A 308-amino-acid polypeptide reads, in one-letter code: MSPRVLILGLGHWGQTLAYLFEQRGCTVSSWGRSQGALSAALFQDIHLLVSALPIKAVREVAAQVTRLHPPLGIILVSATKGLESETFATAADIWQTYCPHHDLVVLSGPNLASEIQQGLPAAAVVGGNLAATKQVQDCLGSPTFRLYSNEDRRGVEMGGIFKNVIAIACGVNDGLGLGVNARSALITRGLVEMVRVGTHWGGQVETFYGLSGLGDLLATCTSALSRNYQVGWHLAQGKSLSQALALTKGTAEGVNTARVLCTYAQQHQLDIPITAMVNAVLCGSLTPQAALHCLLERPFKPEVIPGQ.

3 residues coordinate NADPH: W13, R33, and K81. Residues K81 and G109 each contribute to the sn-glycerol 3-phosphate site. Residue A113 coordinates NADPH. Positions 163, 216, 226, 227, and 228 each coordinate sn-glycerol 3-phosphate. The active-site Proton acceptor is the K163. R227 lines the NADPH pocket. E253 provides a ligand contact to NADPH.

Belongs to the NAD-dependent glycerol-3-phosphate dehydrogenase family.

Its subcellular location is the cytoplasm. The catalysed reaction is sn-glycerol 3-phosphate + NAD(+) = dihydroxyacetone phosphate + NADH + H(+). It catalyses the reaction sn-glycerol 3-phosphate + NADP(+) = dihydroxyacetone phosphate + NADPH + H(+). It participates in membrane lipid metabolism; glycerophospholipid metabolism. Its function is as follows. Catalyzes the reduction of the glycolytic intermediate dihydroxyacetone phosphate (DHAP) to sn-glycerol 3-phosphate (G3P), the key precursor for phospholipid synthesis. The protein is Glycerol-3-phosphate dehydrogenase [NAD(P)+] of Thermosynechococcus vestitus (strain NIES-2133 / IAM M-273 / BP-1).